Reading from the N-terminus, the 140-residue chain is ATP synthase epsilon chain (140 aa).

This sequence belongs to the ATPase epsilon chain family. F-type ATPases have 2 components, CF(1) - the catalytic core - and CF(0) - the membrane proton channel. CF(1) has five subunits: alpha(3), beta(3), gamma(1), delta(1), epsilon(1). CF(0) has three main subunits: a, b and c.

The protein localises to the cell inner membrane. Its function is as follows. Produces ATP from ADP in the presence of a proton gradient across the membrane. The protein is ATP synthase epsilon chain of Yersinia enterocolitica serotype O:8 / biotype 1B (strain NCTC 13174 / 8081).